The chain runs to 732 residues: Protein kinase YpkA (732 aa).

In terms of domain architecture, Protein kinase spans 136 to 408; it reads VAETDKFAEG…SNEARLHEFL (273 aa). Residues 142–150 and lysine 163 contribute to the ATP site; that span reads FAEGESHIS. The active-site Proton acceptor is the aspartate 270.

Belongs to the protein kinase superfamily. Ser/Thr protein kinase family.

The protein localises to the secreted. It carries out the reaction L-seryl-[protein] + ATP = O-phospho-L-seryl-[protein] + ADP + H(+). The catalysed reaction is L-threonyl-[protein] + ATP = O-phospho-L-threonyl-[protein] + ADP + H(+). Functionally, acts as a virulence determinant. The polypeptide is Protein kinase YpkA (ypkA) (Yersinia pestis).